The primary structure comprises 81 residues: RNA-binding protein Hfq (81 aa).

One can recognise a Sm domain in the interval 11 to 71 (DIFLNNARKN…ISTITPTKPI (61 aa)).

This sequence belongs to the Hfq family. In terms of assembly, homohexamer.

Its function is as follows. RNA chaperone that binds small regulatory RNA (sRNAs) and mRNAs to facilitate mRNA translational regulation in response to envelope stress, environmental stress and changes in metabolite concentrations. Also binds with high specificity to tRNAs. This chain is RNA-binding protein Hfq, found in Clostridium beijerinckii (strain ATCC 51743 / NCIMB 8052) (Clostridium acetobutylicum).